The following is a 250-amino-acid chain: UPF0246 protein cce_3295 (250 aa).

Belongs to the UPF0246 family.

This chain is UPF0246 protein cce_3295, found in Crocosphaera subtropica (strain ATCC 51142 / BH68) (Cyanothece sp. (strain ATCC 51142)).